Here is a 440-residue protein sequence, read N- to C-terminus: Gap junction alpha-8 protein (440 aa).

Residues 2–12 (GDWSFLGNILE) lie within the membrane without spanning it. Residues 13 to 21 (EVNEHSTVI) lie on the Cytoplasmic side of the membrane. Residues 22–42 (GRVWLTVLFIFRILILGTAAE) traverse the membrane as a helical segment. Residues 43–71 (FVWGDEQSDFVCNTQQPGCENVCYDEAFP) are Extracellular-facing. Disulfide bonds link C54/C201, C61/C195, and C65/C190. Residues 72–92 (ISHIRLWVLQIIFVSTPSLVY) form a helical membrane-spanning segment. The Cytoplasmic segment spans residues 93–161 (VGHAVHHVRM…GTLLRTYVCH (69 aa)). The disordered stretch occupies residues 108–144 (EREAEELSQQSPGNGGERAPLAADQGSVKKSSSSSKG). Residues 162–182 (IIFKTLFEVGFIVGHYFLYGF) form a helical membrane-spanning segment. Topologically, residues 183–210 (RILPLYRCSRWPCPNVVDCFVSRPTEKT) are extracellular. Residues 211–231 (IFILFMLSVASVSLFLNILEM) traverse the membrane as a helical segment. The Cytoplasmic segment spans residues 232–440 (SHLGLKKIRS…SRARSDDLTV (209 aa)). Residues 334 to 440 (GAQEGVEEEQ…SRARSDDLTV (107 aa)) are disordered. Basic and acidic residues-rich tracts occupy residues 353-365 (VGDK…RVST) and 375-405 (EEEK…ELTP). Residues 423 to 432 (LSRLSKASSR) are compositionally biased toward low complexity.

It belongs to the connexin family. Alpha-type (group II) subfamily. In terms of assembly, a hemichannel or connexon is composed of a hexamer of connexins. A functional gap junction is formed by the apposition of two hemichannels. Forms heteromeric channels with GJA3. Detected in eye lens (at protein level). Eye lens.

The protein localises to the cell membrane. The protein resides in the cell junction. It localises to the gap junction. Its function is as follows. Structural component of eye lens gap junctions. Gap junctions are dodecameric channels that connect the cytoplasm of adjoining cells. They are formed by the docking of two hexameric hemichannels, one from each cell membrane. Small molecules and ions diffuse from one cell to a neighboring cell via the central pore. This is Gap junction alpha-8 protein (GJA8) from Ovis aries (Sheep).